A 549-amino-acid polypeptide reads, in one-letter code: Protein wntless homolog (549 aa).

The N-terminal stretch at 1-34 is a signal peptide; the sequence is MAGGAVIENLSNRKLFVIFAGLLVIQIMFFLIGA. Topologically, residues 36 to 236 are lumenal; the sequence is YAPSPSSYME…RLIEIHQNGG (201 aa). Residues 237 to 257 form a helical membrane-spanning segment; that stretch reads FTLVWLWTKTFMTPVVAICLW. Over 258 to 275 the chain is Cytoplasmic; sequence WYYNRINQLARNPLLLER. A helical membrane pass occupies residues 276–296; the sequence is AILLLGLSLVILDFPIEWISL. Residues 297–310 lie on the Lumenal side of the membrane; the sequence is TYRIPFLLLISDLR. Residues 311-331 traverse the membrane as a helical segment; it reads QGLFYTVLFSFWLIFAGEHLI. At 332 to 345 the chain is on the cytoplasmic side; it reads DDNTRNNLKSYRFN. The helical transmembrane segment at 346–366 threads the bilayer; it reads LSFIITASLGLLIYDLIERGI. Residues 367–383 are Lumenal-facing; it reads QLYDPFYSVWSSPTGSQ. Residues 384-404 form a helical membrane-spanning segment; it reads IAYFAIFISAISTVAYFIFLF. The Cytoplasmic portion of the chain corresponds to 405–439; it reads FKIARVWSTIKSKRSAQIYQTSENRRLKVEGVIYR. Residues 440 to 460 traverse the membrane as a helical segment; it reads FKFLMLFTLLCSAFTIAAYFM. Topologically, residues 461–483 are lumenal; the sequence is KQYGEAQLHGDEARDGFLTGSTS. Residues 484 to 504 traverse the membrane as a helical segment; that stretch reads AFFTGAFGMCNIYVLLLLAMY. Topologically, residues 505–549 are cytoplasmic; the sequence is APSHKHYRGASQLIDENDDDEIMEDPSNQHTESNAMTTFLKPSTD. Residues 524–549 form a disordered region; sequence DEIMEDPSNQHTESNAMTTFLKPSTD. Polar residues predominate over residues 530-549; that stretch reads PSNQHTESNAMTTFLKPSTD.

It belongs to the wntless family. In terms of tissue distribution, expressed in the tail hypodermis, stomatointestinal muscle, the mesoblast cell M and its descendants, CAN neurons, the developing vulva, the pharynx and the pharyngeal intestinal valve.

Its subcellular location is the cell membrane. The protein localises to the early endosome membrane. It is found in the golgi apparatus membrane. It localises to the basal cell membrane. The protein resides in the late endosome membrane. Functionally, probable sorting receptor which regulates endocytosis and secretion of the wnt ligand egl-20. Recycling of mig-14 from the plasma membrane to the Golgi apparatus by the retromer complex is essential for its function. Its endosomal trafficking is regulated by its association with sorting nexin snx-3 on early endosomes and the mtm-6/mtm-9 myotubularin complex. Required in embryonic development for endoderm specification and the correct positioning and orientation of the mitotic spindles and division planes in blastomere cells. Functions during vulval development, playing a role in vulval precursor cell fate specification. During development, specifically regulates the migration of HSN neurons, the left Q neuroblast (QL) and its descendants and the distal tip cells of the gonads. Positioning of Q neuroblasts may be both dependent and independent of hox gene mab-5. Involved in establishing ALM and PLM neuronal cell polarity. This Caenorhabditis elegans protein is Protein wntless homolog.